The primary structure comprises 35 residues: UPF0387 membrane protein YohO (35 aa).

Residues 6–26 (IGVIALFLFMAFGGIGGVMLA) form a helical membrane-spanning segment.

The protein belongs to the UPF0387 family.

The protein resides in the cell inner membrane. This is UPF0387 membrane protein YohO from Escherichia coli O8 (strain IAI1).